The primary structure comprises 321 residues: MSGARLHTLLPELTTRQSVMVVGAAVIDVIADAYALPWRGCDIELKQQSVNVGGCALNIAVALKRLGIEAGNALPLGQGVWAEMIRNRMAKEGLISLIDNAEGDNGWCLALVEPDGERTFMSFSGVENQWNRQWLARLTVAPGSLLYFSGYQLASPCGELLVEWLEELQDVTPFIDFGPRIGDIPDALLARIMACRPLVSLNRQEAEIAAERFALSAEITTLGKQWQEKFAAPLIVRLDKEGAWYFSNDASGCIPAFPTQVVDTIGAGDSHAGGVLAGLASGLPLADAVLLGNAVASWVVGHRGGDCAPTREELLLAHKNV.

This sequence belongs to the carbohydrate kinase PfkB family.

This is an uncharacterized protein from Escherichia coli (strain K12).